A 256-amino-acid polypeptide reads, in one-letter code: Trans-aconitate 2-methyltransferase (256 aa).

This sequence belongs to the methyltransferase superfamily. Tam family.

The protein resides in the cytoplasm. It carries out the reaction trans-aconitate + S-adenosyl-L-methionine = (E)-3-(methoxycarbonyl)pent-2-enedioate + S-adenosyl-L-homocysteine. Catalyzes the S-adenosylmethionine monomethyl esterification of trans-aconitate. In Rhizobium leguminosarum bv. trifolii (strain WSM2304), this protein is Trans-aconitate 2-methyltransferase.